The primary structure comprises 282 residues: MSLYRDHQALEQLTLGKTTLYRDQYDASLLQAVPRNMNREPLEIFPDNLPFHGADIWTLYELSWLNNRGLPQVAVGHVSLNAASTNLIESKSFKLYLNSFNQTRFENWQAVEETLQRDLAACAEGEVEVALHHLDHFNNQPISTFTGECIDDQDIEVTEYDFNRHYLQNAAQGPQVEEVLVSHLLKSNCLITHQPDWGSVQIHYKGSKINREALLRYLISFRHHNEFHEQCVERIFSDLQQLCAPEKLSVYARYTRRGGLDINPWRTNSEGFVPATGRLARQ.

A substrate-binding site is contributed by Ile-88–Ser-90. Residue Ser-90–Lys-91 coordinates NADPH. Cys-189 serves as the catalytic Thioimide intermediate. The active-site Proton donor is the Asp-196. Residue His-228–Glu-229 coordinates substrate. Arg-257–Gly-258 contacts NADPH.

It belongs to the GTP cyclohydrolase I family. QueF type 2 subfamily. In terms of assembly, homodimer.

It is found in the cytoplasm. It catalyses the reaction 7-aminomethyl-7-carbaguanine + 2 NADP(+) = 7-cyano-7-deazaguanine + 2 NADPH + 3 H(+). The protein operates within tRNA modification; tRNA-queuosine biosynthesis. Catalyzes the NADPH-dependent reduction of 7-cyano-7-deazaguanine (preQ0) to 7-aminomethyl-7-deazaguanine (preQ1). The polypeptide is NADPH-dependent 7-cyano-7-deazaguanine reductase (Photorhabdus laumondii subsp. laumondii (strain DSM 15139 / CIP 105565 / TT01) (Photorhabdus luminescens subsp. laumondii)).